Reading from the N-terminus, the 208-residue chain is Coiled-coil domain-containing protein 25 (208 aa).

At 1-105 the chain is on the extracellular side; sequence MVFYFTSSSV…SNLKKTADMD (105 aa). The DNA-binding stretch occupies residues 21–25; sequence KDKYE. Position 23 is an N6-acetyllysine (lysine 23). The helical transmembrane segment at 106–122 threads the bilayer; it reads VGQIGFHRQKDVKIVTV. The stretch at 117–187 forms a coiled coil; that stretch reads VKIVTVEKKV…REMDELRSYS (71 aa). Over 123 to 208 the chain is Cytoplasmic; the sequence is EKKVNEILNR…QDGNDSDEFM (86 aa). Basic and acidic residues predominate over residues 145–184; it reads EAEKECRDHEERNEKKAQIQEMKRREKEEMKKKREMDELR. A disordered region spans residues 145–208; that stretch reads EAEKECRDHE…QDGNDSDEFM (64 aa). At serine 204 the chain carries Phosphoserine.

The protein belongs to the CCDC25 family. In terms of assembly, interacts (via cytoplasmic region) with ILK.

It is found in the cell membrane. Its subcellular location is the endomembrane system. Its function is as follows. Transmembrane receptor that senses neutrophil extracellular traps (NETs) and triggers the ILK-PARVB pathway to enhance cell motility. NETs are mainly composed of DNA fibers and are released by neutrophils to bind pathogens during inflammation. Formation of NETs is also associated with cancer metastasis, NET-DNA acting as a chemotactic factor to attract cancer cells. Specifically binds NETs on its extracellular region, in particular the 8-OHdG-enriched DNA present in NETs, and recruits ILK, initiating the ILK-PARVB cascade to induce cytoskeleton rearrangement and directional migration of cells. The polypeptide is Coiled-coil domain-containing protein 25 (Bos taurus (Bovine)).